The chain runs to 397 residues: 2-acyl-1-lysophosphatidylinositol acyltransferase (397 aa).

The short motif at histidine 112–aspartate 117 is the HXXXXD motif element.

It belongs to the 1-acyl-sn-glycerol-3-phosphate acyltransferase family.

Its subcellular location is the lipid droplet. It catalyses the reaction 1-heptadecanoyl-sn-glycero-3-phosphate + octadecanoyl-CoA = 1-heptadecanoyl-2-octadecanoyl-sn-glycero-3-phosphate + CoA. The catalysed reaction is 1-heptadecanoyl-sn-glycero-3-phosphate + tetradecanoyl-CoA = 1-heptadecanoyl-2-tetradecanoyl-sn-glycero-3-phosphate + CoA. It carries out the reaction 1-heptadecanoyl-sn-glycero-3-phosphate + hexadecanoyl-CoA = 1-heptadecanoyl-2-hexadecanoyl-sn-glycero-3-phosphate + CoA. In terms of biological role, acyltransferase with lysophosphatidic acid acyltransferase (LPAAT) activity. Fatty acyl substrates include 18:0-acyl-CoA, 16:0-acyl-CoA, 17:0-acyl-CoA and 14:0-acyl-CoA. Responsible for the acyl-CoA-dependent introduction of saturated very long chain fatty acids (VLCFAs) into phosphatidylinositol, transferring saturated FAs with 18 to 26 carbon atoms. Responsible for the incorporation of stearate into phosphatidylinositol. Overexpression has an effect on chromosome stability. Regulates phosphorylation and expression of glycerol-3-phosphate acyltransferase SCT1. In Saccharomyces cerevisiae (strain ATCC 204508 / S288c) (Baker's yeast), this protein is 2-acyl-1-lysophosphatidylinositol acyltransferase.